The chain runs to 455 residues: N(5)-hydroxyornithine:cis-anhydromevalonyl coenzyme A-N(5)-transacylase SIDF (455 aa).

The PTS1-type peroxisomal targeting signal motif lies at proline 453–leucine 455.

The protein belongs to the lysine N-acyltransferase mbtK family.

The protein localises to the peroxisome. Its pathway is siderophore biosynthesis. Hydroxyornithine transacylase; part of the gene cluster that mediates the biosynthesis of at least 11 siderophores, including beauverichelin A, dimerumic acid (DA), Na-dimethyl coprogen (NADC), eleutherazine B, ferricrocin (FC), fusarinine A, fusarinine C (FsC), metachelin A, mevalonolactone, rhodotorulic acid (RA) and tenellin. This cocktail of siderophores for iron metabolism is essential for virulence, and more specifically for the fungal virulence in penetrating through the host cuticle. Siderophore synthesis is also involved in conidial germination under iron-deficient conditions. For biosynthesis of fusarinine C, the transacylase SIDF transfers anhydromevalonyl to N(5)-hydroxyornithine. The required anhydromevalonyl-CoA moiety is derived from mevalonate by CoA ligation and dehydration catalyzed by SIDI and sidH respectively. In Beauveria bassiana (strain ARSEF 2860) (White muscardine disease fungus), this protein is N(5)-hydroxyornithine:cis-anhydromevalonyl coenzyme A-N(5)-transacylase SIDF.